A 204-amino-acid chain; its full sequence is Protein-L-isoaspartate O-methyltransferase (204 aa).

This sequence belongs to the methyltransferase superfamily. L-isoaspartyl/D-aspartyl protein methyltransferase family. In terms of assembly, monomer.

It localises to the cytoplasm. It carries out the reaction [protein]-L-isoaspartate + S-adenosyl-L-methionine = [protein]-L-isoaspartate alpha-methyl ester + S-adenosyl-L-homocysteine. In terms of biological role, catalyzes the methyl esterification of L-isoaspartyl residues in peptides and proteins that result from spontaneous decomposition of normal L-aspartyl and L-asparaginyl residues. It plays a role in the repair and/or degradation of damaged proteins. This chain is Protein-L-isoaspartate O-methyltransferase (pcm), found in Rhizobium meliloti (strain 1021) (Ensifer meliloti).